Here is a 631-residue protein sequence, read N- to C-terminus: Golgin subfamily A member 8A (631 aa).

Positions 1 to 20 (MLPVDGEERKSEGSDTEGDR) are enriched in basic and acidic residues. Disordered stretches follow at residues 1 to 103 (MLPV…QEQA), 127 to 154 (KKQVEHQLEEEKKANNEKQKAERELEGQ), 426 to 447 (TSAEKEPEAAVPASGTGGESSG), and 488 to 520 (PGDSAKDASPGGGHHQAGPGQGGEEGEAAGAAG). Over residues 78-92 (SLYLSPKSSSASSSL) the composition is skewed to low complexity. Residues 93–103 (HARQSPCQEQA) are compositionally biased toward polar residues. Residues 110 to 468 (SIKISRLNDT…REHVEKLELG (359 aa)) adopt a coiled-coil conformation. The segment covering 128–152 (KQVEHQLEEEKKANNEKQKAERELE) has biased composition (basic and acidic residues). A compositionally biased stretch (gly residues) spans 497–510 (PGGGHHQAGPGQGG). Positions 519–631 (AGDGVAACGS…CWAWLPRRRR (113 aa)) are golgi-targeting domain.

The protein belongs to the GOLGA8 family.

It localises to the golgi apparatus. Its subcellular location is the golgi stack membrane. Its function is as follows. May be involved in maintaining Golgi structure. In Homo sapiens (Human), this protein is Golgin subfamily A member 8A (GOLGA8A).